The chain runs to 917 residues: Calcium-activated chloride channel regulator 1 (917 aa).

Positions 1-21 (MGSFRSSLFILVLHLLEGAQS) are cleaved as a signal peptide. The segment at 46-199 (DERLIQNIKD…AIRGTNVLPQ (154 aa)) is metalloprotease domain. Histidine 156 is a Zn(2+) binding site. Residue glutamate 157 is part of the active site. Residues histidine 160 and asparagine 167 each coordinate Zn(2+). In terms of domain architecture, VWFA spans 306 to 475 (IVCLVLDKSG…NGLIDAFGAL (170 aa)). Asparagine 503, asparagine 772, asparagine 806, asparagine 812, asparagine 838, and asparagine 893 each carry an N-linked (GlcNAc...) asparagine glycan.

The protein belongs to the CLCR family. Post-translationally, glycosylated. In terms of processing, the translation product is autoproteolytically cleaved by the metalloprotease domain in the endoplasmic reticulum into a N-terminal and a C-terminal products that remain physically associated with each other. The cleavage is necessary for calcium-activated chloride channel (CaCC) activation activity. In terms of tissue distribution, expressed in ileum, trachea, and the major salivary glands. In ileum, expressed to the crypt and villus epithelia, whereas in trachea expressed in both surface epithelium and submucosal glands.

The protein resides in the secreted. It localises to the extracellular space. In terms of biological role, may be involved in mediating calcium-activated chloride conductance. May play critical roles in goblet cell metaplasia, mucus hypersecretion, cystic fibrosis and AHR. May be involved in the regulation of mucus production and/or secretion by goblet cells. Involved in the regulation of tissue inflammation in the innate immune response. May play a role as a tumor suppressor. Induces MUC5AC. Induces a cAMP-dependent chloride conductance possibly through effects on CFTR in colon carcinoma cells. The protein is Calcium-activated chloride channel regulator 1 (CLCA1) of Sus scrofa (Pig).